We begin with the raw amino-acid sequence, 204 residues long: MIGKLKGTIEEIGEDYALVDVHGVCYVAYCSARTLSRLGSVGEACILFIETYVREDQIRLFGFMAVLEREWFNLLQTVQGVGAKVALALLSTLTPSELANAIALQDRTAVSRAPGVGPKVAMRIVTELKNKVPAFAGEATNIGFKQELGEGVAPAPVSDAVSALTNLGYSRDQAANAIAAAMKVAGDEADSAKLIRLGLKELSR.

Residues 1 to 64 (MIGKLKGTIE…EDQIRLFGFM (64 aa)) are domain I. Positions 65-143 (AVLEREWFNL…AFAGEATNIG (79 aa)) are domain II. Residues 144 to 151 (FKQELGEG) form a flexible linker region. Residues 152–204 (VAPAPVSDAVSALTNLGYSRDQAANAIAAAMKVAGDEADSAKLIRLGLKELSR) are domain III.

Belongs to the RuvA family. In terms of assembly, homotetramer. Forms an RuvA(8)-RuvB(12)-Holliday junction (HJ) complex. HJ DNA is sandwiched between 2 RuvA tetramers; dsDNA enters through RuvA and exits via RuvB. An RuvB hexamer assembles on each DNA strand where it exits the tetramer. Each RuvB hexamer is contacted by two RuvA subunits (via domain III) on 2 adjacent RuvB subunits; this complex drives branch migration. In the full resolvosome a probable DNA-RuvA(4)-RuvB(12)-RuvC(2) complex forms which resolves the HJ.

Its subcellular location is the cytoplasm. Functionally, the RuvA-RuvB-RuvC complex processes Holliday junction (HJ) DNA during genetic recombination and DNA repair, while the RuvA-RuvB complex plays an important role in the rescue of blocked DNA replication forks via replication fork reversal (RFR). RuvA specifically binds to HJ cruciform DNA, conferring on it an open structure. The RuvB hexamer acts as an ATP-dependent pump, pulling dsDNA into and through the RuvAB complex. HJ branch migration allows RuvC to scan DNA until it finds its consensus sequence, where it cleaves and resolves the cruciform DNA. The sequence is that of Holliday junction branch migration complex subunit RuvA from Rhizobium rhizogenes (strain K84 / ATCC BAA-868) (Agrobacterium radiobacter).